We begin with the raw amino-acid sequence, 425 residues long: MLDIRFVRESPDVVRADLRKRNDLEKLAWVDDLLAKDSQARAMQVKVDELRRRRNEISREINEARKAGKDTSALMAEARDIPRQIKEAETEMEESRNKVHYYLMRLPNILDDSVPVGKDDTENVEVKRWGEPVQKDFEIKNHGLLAVEHGWADFERAAKVAGAGFYFLKGNMVLLDMALQRFAMDLLVKRGFTPVTPPYMMNRKSYEGVTDLADFEKVMYKIEGDDMYLIATSEHPIGAMYQGEIFEEKDLPLRLAGISPCFRREIGAHGLDTKGLFRVHQFHKIEQFVFCKPEDSWKIHEEILANAEAVFQQLGLPYHVVNICTGDIGTVAAKKYDIEVWMPRENTYKEVVSCSNCTAYQATRLNIKVRDPKDFESKRYVHTLNSTAIATSRAMRAILENNQQKDGSVLIPEVLRPYMNGLEYL.

Thr232–Glu234 is an L-serine binding site. ATP is bound by residues Arg263–Glu265 and Val279. Glu286 contributes to the L-serine binding site. Glu350–Ser353 provides a ligand contact to ATP. Thr387 provides a ligand contact to L-serine.

The protein belongs to the class-II aminoacyl-tRNA synthetase family. Type-1 seryl-tRNA synthetase subfamily. In terms of assembly, homodimer. The tRNA molecule binds across the dimer.

It is found in the cytoplasm. The catalysed reaction is tRNA(Ser) + L-serine + ATP = L-seryl-tRNA(Ser) + AMP + diphosphate + H(+). It catalyses the reaction tRNA(Sec) + L-serine + ATP = L-seryl-tRNA(Sec) + AMP + diphosphate + H(+). Its pathway is aminoacyl-tRNA biosynthesis; selenocysteinyl-tRNA(Sec) biosynthesis; L-seryl-tRNA(Sec) from L-serine and tRNA(Sec): step 1/1. Catalyzes the attachment of serine to tRNA(Ser). Is also able to aminoacylate tRNA(Sec) with serine, to form the misacylated tRNA L-seryl-tRNA(Sec), which will be further converted into selenocysteinyl-tRNA(Sec). The polypeptide is Serine--tRNA ligase (Methanocella arvoryzae (strain DSM 22066 / NBRC 105507 / MRE50)).